A 419-amino-acid polypeptide reads, in one-letter code: Carboxypeptidase A1 (419 aa).

The first 16 residues, 1–16, serve as a signal peptide directing secretion; the sequence is MKRLLVLSVLLAAVFG. Positions 17 to 110 are cleaved as a propeptide — activation peptide; it reads NENFVGHQVL…KQQMSAFQAR (94 aa). Positions 121–414 constitute a Peptidase M14 domain; it reads TYHTLDEIYE…LALLTIMDHT (294 aa). His-179 and Glu-182 together coordinate Zn(2+). Substrate contacts are provided by residues 179–182, Arg-237, and 254–255; these read HSRE and NR. Cysteines 248 and 271 form a disulfide. His-306 lines the Zn(2+) pocket. Residues 307-308 and Tyr-358 contribute to the substrate site; that span reads SY. The active-site Proton donor/acceptor is Glu-380.

Belongs to the peptidase M14 family. In terms of assembly, monomer. Zn(2+) is required as a cofactor.

It localises to the secreted. It catalyses the reaction Release of a C-terminal amino acid, but little or no action with -Asp, -Glu, -Arg, -Lys or -Pro.. Functionally, carboxypeptidase that catalyzes the release of a C-terminal amino acid, but has little or no action with -Asp, -Glu, -Arg, -Lys or -Pro. The polypeptide is Carboxypeptidase A1 (Cpa1) (Mus musculus (Mouse)).